A 490-amino-acid polypeptide reads, in one-letter code: Dual specificity protein kinase CLK3 (490 aa).

The disordered stretch occupies residues 1–138 (MHHCKRYRSP…SKRSSRSVED (138 aa)). Y7 is subject to Phosphotyrosine. A phosphoserine mark is found at S9, S49, S51, S67, S76, and S78. Basic and acidic residues-rich tracts occupy residues 26–56 (YSRE…DRLP) and 63–76 (ERRD…EERS). The span at 88-116 (RSRHRRRSRERGPYRTRKHAHHCHKRRTR) shows a compositional bias: basic residues. The segment covering 117–130 (SCSSASSRSQQSSK) has biased composition (low complexity). S135 carries the phosphoserine modification. In terms of domain architecture, Protein kinase spans 156 to 472 (YEIVGNLGEG…LAEALLHPFF (317 aa)). ATP is bound by residues 162 to 170 (LGEGTFGKV) and K186. Residue D283 is the Proton acceptor of the active site.

This sequence belongs to the protein kinase superfamily. CMGC Ser/Thr protein kinase family. Lammer subfamily. Post-translationally, autophosphorylates on all three types of residues. In terms of tissue distribution, endothelial cells.

The protein localises to the nucleus. The protein resides in the cytoplasm. It localises to the cytoplasmic vesicle. It is found in the secretory vesicle. Its subcellular location is the acrosome. The protein localises to the nucleus speckle. The enzyme catalyses L-seryl-[protein] + ATP = O-phospho-L-seryl-[protein] + ADP + H(+). The catalysed reaction is L-threonyl-[protein] + ATP = O-phospho-L-threonyl-[protein] + ADP + H(+). It carries out the reaction L-tyrosyl-[protein] + ATP = O-phospho-L-tyrosyl-[protein] + ADP + H(+). Its activity is regulated as follows. Leucettine L41 inhibits its kinase activity and affects the regulation of alternative splicing mediated by phosphorylation of SR proteins. Functionally, dual specificity kinase acting on both serine/threonine and tyrosine-containing substrates. Phosphorylates serine- and arginine-rich (SR) proteins of the spliceosomal complex. May be a constituent of a network of regulatory mechanisms that enable SR proteins to control RNA splicing and can cause redistribution of SR proteins from speckles to a diffuse nucleoplasmic distribution. Phosphorylates SRSF1 and SRSF3. Regulates the alternative splicing of tissue factor (F3) pre-mRNA in endothelial cells. This chain is Dual specificity protein kinase CLK3, found in Homo sapiens (Human).